The following is a 137-amino-acid chain: Mandibular organ-inhibiting hormone (137 aa).

An N-terminal signal peptide occupies residues M1 to G26. Q63 is modified (pyrrolidone carboxylic acid). Cystine bridges form between C69–C105, C85–C101, and C88–C114. The residue at position 134 (V134) is a Valine amide.

The protein belongs to the arthropod CHH/MIH/GIH/VIH hormone family. As to expression, produced by the medulla terminalis X-organ in the eyestalks and transported to the sinus gland where it is stored and released.

The protein localises to the secreted. Functionally, represses the synthesis of methyl farnesoate, the precursor of insect juvenile hormone III in the mandibular organ. Also has hyperglycemic activity. This chain is Mandibular organ-inhibiting hormone, found in Libinia emarginata (Portly spider crab).